The primary structure comprises 182 residues: Large ribosomal subunit protein uL6 (182 aa).

The protein belongs to the universal ribosomal protein uL6 family. Part of the 50S ribosomal subunit.

In terms of biological role, this protein binds to the 23S rRNA, and is important in its secondary structure. It is located near the subunit interface in the base of the L7/L12 stalk, and near the tRNA binding site of the peptidyltransferase center. The sequence is that of Large ribosomal subunit protein uL6 from Methanocaldococcus jannaschii (strain ATCC 43067 / DSM 2661 / JAL-1 / JCM 10045 / NBRC 100440) (Methanococcus jannaschii).